Consider the following 1877-residue polypeptide: Proprotein convertase subtilisin/kexin type 5 (1877 aa).

The signal sequence occupies residues 1–34; that stretch reads MDWDWGNRCSRPGRRDLLCVLALLAGCLLPVCRT. A propeptide spanning residues 35 to 116 is cleaved from the precursor; the sequence is RVYTNHWAVK…QQVVKKRTKR (82 aa). Residues 117 to 1768 lie on the Extracellular side of the membrane; that stretch reads DYDLSHAQST…EAEFYEHTKT (1652 aa). Residues 136-455 enclose the Peptidase S8 domain; the sequence is MWYMHCSDNT…FGLMDAEAMV (320 aa). Residues Asp173 and His214 each act as charge relay system in the active site. Residues Asn227 and Asn383 are each glycosylated (N-linked (GlcNAc...) asparagine). The Charge relay system role is filled by Ser388. In terms of domain architecture, P/Homo B spans 463–603; that stretch reads TVPQQHVCVE…SLVLYGTSVQ (141 aa). A Cell attachment site motif is present at residues 521 to 523; that stretch reads RGD. FU repeat units follow at residues 632 to 682, 685 to 732, 736 to 779, 781 to 826, 834 to 881, 884 to 929, 931 to 981, 984 to 1030, 1034 to 1079, 1081 to 1123, 1127 to 1168, 1206 to 1248, 1252 to 1299, 1301 to 1345, 1347 to 1390, 1392 to 1438, 1442 to 1487, 1491 to 1536, 1540 to 1585, 1589 to 1636, 1640 to 1685, and 1691 to 1738; these read EDYA…GHYH, KKRC…GSYE, KNVC…GQFF, GHDC…SYYL, YKSC…GEYI, QGHC…WKFE, KKQC…GHYP, GHAC…GEFQ, YEEC…KTFG, KWEC…GFHG, LGEC…STWP, TSQN…GTWP, SGSC…GFYA, DGVC…KHVA, EGVC…SFYP, MRQC…GTYK, NDEC…VEYW, SHRC…GYHT, SQQC…GYYG, SGRC…HYYA, AQTC…GEYR, and NFNC…SHSR. The CRM (Cys-rich motif) stretch occupies residues 638–1753; it reads CDPECSEVGC…CDCQSSTDEC (1116 aa). N-linked (GlcNAc...) asparagine glycosylation occurs at Asn667. Asn754, Asn804, and Asn854 each carry an N-linked (GlcNAc...) asparagine glycan. 2 N-linked (GlcNAc...) asparagine glycosylation sites follow: Asn951 and Asn1016. Asn1220 carries an N-linked (GlcNAc...) asparagine glycan. A glycan (N-linked (GlcNAc...) asparagine) is linked at Asn1317. N-linked (GlcNAc...) asparagine glycosylation occurs at Asn1523. Asn1711 and Asn1733 each carry an N-linked (GlcNAc...) asparagine glycan. Residues 1769-1789 form a helical membrane-spanning segment; sequence ALLVTSGAMLLLLLGAAAVVW. The Cytoplasmic segment spans residues 1790–1877; it reads RKSRSRPVAK…EYDDESYSYQ (88 aa). AC regions lie at residues 1825 to 1844 and 1856 to 1877; these read VIEY…IVYM and YGLL…YSYQ.

This sequence belongs to the peptidase S8 family. As to expression, PC5A is expressed in most tissues but is most abundant in the intestine and adrenals. PC5B is expressed in the intestine, adrenals and lung but not in the brain.

Its subcellular location is the secreted. The protein resides in the endomembrane system. Its function is as follows. Serine endoprotease that processes various proproteins by cleavage at paired basic amino acids, recognizing the RXXX[KR]R consensus motif. Likely functions in the constitutive and regulated secretory pathways. Plays an essential role in pregnancy establishment by proteolytic activation of a number of important factors such as BMP2, CALD1 and alpha-integrins. May be responsible for the maturation of gastrointestinal peptides. May be involved in the cellular proliferation of adrenal cortex via the activation of growth factors. The polypeptide is Proprotein convertase subtilisin/kexin type 5 (Pcsk5) (Mus musculus (Mouse)).